A 499-amino-acid chain; its full sequence is Aldehyde dehydrogenase 1 (499 aa).

NAD(+) is bound by residues 164 to 166 (IPW), 164 to 167 (IPWN), 190 to 193 (KPAE), 223 to 224 (GS), 243 to 244 (GS), 243 to 248 (GSTKVG), and 266 to 268 (ELG). The Proton acceptor role is filled by glutamate 266. Cysteine 300 (nucleophile) is an active-site residue. NAD(+) is bound by residues 346-350 (QQYEK) and 397-399 (EIF).

Belongs to the aldehyde dehydrogenase family. As to quaternary structure, homotetramer. As to expression, expressed in flowers and disk florets.

The enzyme catalyses an aldehyde + NAD(+) + H2O = a carboxylate + NADH + 2 H(+). The catalysed reaction is an aldehyde + NADP(+) + H2O = a carboxylate + NADPH + 2 H(+). It carries out the reaction octanal + NADP(+) + H2O = octanoate + NADPH + 2 H(+). It catalyses the reaction (1R,3R)-chrysanthemal + NAD(+) + H2O = (1R,3R)-chrysanthemate + NADH + 2 H(+). The enzyme catalyses (1R,3R)-chrysanthemal + NADP(+) + H2O = (1R,3R)-chrysanthemate + NADPH + 2 H(+). The catalysed reaction is (E)-hept-2-enal + NADP(+) + H2O = (E)-hept-2-enoate + NADPH + 2 H(+). It carries out the reaction dodecanal + NADP(+) + H2O = dodecanoate + NADPH + 2 H(+). It catalyses the reaction citral + NADP(+) + H2O = 3,7-dimethylocta-2,6-dienoate + NADPH + 2 H(+). The enzyme catalyses perillyl aldehyde + NADP(+) + H2O = perillate + NADPH + 2 H(+). The catalysed reaction is (2E,6E)-farnesal + NADP(+) + H2O = (2E,6E)-farnesoate + NADPH + 2 H(+). It carries out the reaction (S)-(-)-citronellal + NADP(+) + H2O = (S)-(-)-citronellate + NADPH + 2 H(+). The protein operates within isoprenoid biosynthesis. Component of the monoterpenoid pyrethrins biosynthesis; pyrethrins are widely used plant-derived pesticide. Mediates the conversion of trans-chrysanthemal into trans-chrysanthemic acid. Can also use octanal, hept-2-enal, dodecanal, citral, farnesal, citronellal and perillyl aldehyde as substrates. This Tanacetum cinerariifolium (Dalmatian daisy) protein is Aldehyde dehydrogenase 1.